A 423-amino-acid chain; its full sequence is Glutamyl-tRNA(Gln) amidotransferase subunit A (423 aa).

The segment at 1–20 (MSHNAFITEETIEPTDDGPL) is disordered. The span at 10–19 (ETIEPTDDGP) shows a compositional bias: acidic residues. Catalysis depends on charge relay system residues Lys28 and Ser103. Positions 75 to 108 (EFGMGTTTETSAFGPTENPAAEGRVPGGSSGGSA) are disordered. Ser127 (acyl-ester intermediate) is an active-site residue. A disordered region spans residues 183 to 206 (DERDGTTREPPAGQPTYADAADGD).

This sequence belongs to the amidase family. GatA subfamily. In terms of assembly, heterotrimer of A, B and C subunits.

The enzyme catalyses L-glutamyl-tRNA(Gln) + L-glutamine + ATP + H2O = L-glutaminyl-tRNA(Gln) + L-glutamate + ADP + phosphate + H(+). Functionally, allows the formation of correctly charged Gln-tRNA(Gln) through the transamidation of misacylated Glu-tRNA(Gln) in organisms which lack glutaminyl-tRNA synthetase. The reaction takes place in the presence of glutamine and ATP through an activated gamma-phospho-Glu-tRNA(Gln). This chain is Glutamyl-tRNA(Gln) amidotransferase subunit A, found in Natronomonas pharaonis (strain ATCC 35678 / DSM 2160 / CIP 103997 / JCM 8858 / NBRC 14720 / NCIMB 2260 / Gabara) (Halobacterium pharaonis).